A 230-amino-acid polypeptide reads, in one-letter code: Uracil-DNA glycosylase (230 aa).

Asp-71 serves as the catalytic Proton acceptor.

The protein belongs to the uracil-DNA glycosylase (UDG) superfamily. UNG family.

The protein resides in the cytoplasm. The enzyme catalyses Hydrolyzes single-stranded DNA or mismatched double-stranded DNA and polynucleotides, releasing free uracil.. Its function is as follows. Excises uracil residues from the DNA which can arise as a result of misincorporation of dUMP residues by DNA polymerase or due to deamination of cytosine. This chain is Uracil-DNA glycosylase, found in Tropheryma whipplei (strain TW08/27) (Whipple's bacillus).